Reading from the N-terminus, the 225-residue chain is MSLIEFPLLDQTSSNSVISTTLKDLSNWSRLSSLWPLLYGTSCCFIEFASLIGSRFDFDRYGLVPRSSPRQADLILTAGTVTMKMAPSLVRLYEQMPEPKYVIAMGACTITGGMFSTDSYSTVRGVDKLIPVDVYLPGCPPKPEAVIDALTKLRKKISREIVEDRTLSQKKNRCFTTSHKLYVRRSTNTGTYEQELLYQSPSTLDISSETFFKSKSPVSSYKLVN.

[4Fe-4S] cluster contacts are provided by Cys43, Cys44, Cys108, and Cys139.

This sequence belongs to the complex I 20 kDa subunit family. In terms of assembly, NDH is composed of at least 16 different subunits, 5 of which are encoded in the nucleus. Requires [4Fe-4S] cluster as cofactor.

The protein localises to the plastid. The protein resides in the chloroplast thylakoid membrane. The enzyme catalyses a plastoquinone + NADH + (n+1) H(+)(in) = a plastoquinol + NAD(+) + n H(+)(out). The catalysed reaction is a plastoquinone + NADPH + (n+1) H(+)(in) = a plastoquinol + NADP(+) + n H(+)(out). In terms of biological role, NDH shuttles electrons from NAD(P)H:plastoquinone, via FMN and iron-sulfur (Fe-S) centers, to quinones in the photosynthetic chain and possibly in a chloroplast respiratory chain. The immediate electron acceptor for the enzyme in this species is believed to be plastoquinone. Couples the redox reaction to proton translocation, and thus conserves the redox energy in a proton gradient. The protein is NAD(P)H-quinone oxidoreductase subunit K, chloroplastic of Oryza nivara (Indian wild rice).